Reading from the N-terminus, the 303-residue chain is Acetylglutamate kinase (303 aa).

Residues 69 to 70, Arg-91, and Asn-190 contribute to the substrate site; that span reads GG.

The protein belongs to the acetylglutamate kinase family. ArgB subfamily.

The protein localises to the cytoplasm. It catalyses the reaction N-acetyl-L-glutamate + ATP = N-acetyl-L-glutamyl 5-phosphate + ADP. It functions in the pathway amino-acid biosynthesis; L-arginine biosynthesis; N(2)-acetyl-L-ornithine from L-glutamate: step 2/4. Functionally, catalyzes the ATP-dependent phosphorylation of N-acetyl-L-glutamate. In Nocardia farcinica (strain IFM 10152), this protein is Acetylglutamate kinase.